Consider the following 205-residue polypeptide: Sarcosine oxidase subunit gamma (205 aa).

Belongs to the SoxG family. In terms of assembly, heterotetramer composed of subunits alpha (SoxA), beta (SoxB), gamma (SoxG) and delta (SoxD).

Its subcellular location is the cytoplasm. The enzyme catalyses sarcosine + (6S)-5,6,7,8-tetrahydrofolate + O2 = (6R)-5,10-methylene-5,6,7,8-tetrahydrofolate + glycine + H2O2. It catalyses the reaction sarcosine + O2 + H2O = formaldehyde + glycine + H2O2. With respect to regulation, inhibited by Zn(2+), Cu(2+), Cd(2+), Hg(2+), Ag(+), p-chloromercuribenzoate (p-CMB), iodoacetamide, N-ethylmaleimide, CN(-), o-phenanthroline and sodium lauryl sulfate. In terms of biological role, in the presence of tetrahydrofolate, catalyzes the oxidative demethylation of sarcosine to yield glycine, 5,10-methylenetetrahydrofolate and hydrogen peroxide. In the absence of tetrahydrofolate, catalyzes the oxidative demethylation of sarcosine to yield glycine, formaldehyde and hydrogen peroxide. Can also use N-methyl-L-alanine and N-ethyl-L-glycine. Is very specific for oxygen as an acceptor. This chain is Sarcosine oxidase subunit gamma, found in Corynebacterium sp. (strain U-96).